Here is a 115-residue protein sequence, read N- to C-terminus: MTRNWSFRVIFVSAMWCALLKFATLEAPKDDFEYDGGCPFVVLDNGTHVKPAGCSHLCNGAPETLDNIECYNVTEEVAKRMTPGIPYACWLGWCSKGECKRDNRTEVCYRGSEEE.

The signal sequence occupies residues 1 to 25 (MTRNWSFRVIFVSAMWCALLKFATL). 4 disulfide bridges follow: cysteine 38–cysteine 58, cysteine 54–cysteine 94, cysteine 70–cysteine 99, and cysteine 89–cysteine 108. N-linked (GlcNAc...) asparagine glycans are attached at residues asparagine 45, asparagine 72, and asparagine 103.

The protein localises to the secreted. Its function is as follows. Salivary chemokine-binding protein which binds to host chemokine CCL2. This chain is Evasin P1183, found in Amblyomma triste (Neotropical tick).